A 261-amino-acid chain; its full sequence is Acetoacetate decarboxylase 2 (261 aa).

Lysine 116 (schiff-base intermediate with acetoacetate) is an active-site residue.

This sequence belongs to the ADC family.

It catalyses the reaction acetoacetate + H(+) = acetone + CO2. Its function is as follows. Catalyzes the conversion of acetoacetate to acetone and carbon dioxide. The sequence is that of Acetoacetate decarboxylase 2 from Mesorhizobium japonicum (strain LMG 29417 / CECT 9101 / MAFF 303099) (Mesorhizobium loti (strain MAFF 303099)).